Here is an 814-residue protein sequence, read N- to C-terminus: Lon protease (814 aa).

The segment at 1-20 (MANEAHNIEHTDPEFRDDSA) is disordered. The Lon N-terminal domain maps to 25–219 (LPLLPVRDTV…KINQHLAKEL (195 aa)). An ATP-binding site is contributed by 372 to 379 (GPPGVGKT). The Lon proteolytic domain maps to 610-792 (TKRAGVVVGL…DEVLEIALPS (183 aa)). Catalysis depends on residues Ser697 and Lys740.

Belongs to the peptidase S16 family. Homohexamer. Organized in a ring with a central cavity.

The protein localises to the cytoplasm. The enzyme catalyses Hydrolysis of proteins in presence of ATP.. ATP-dependent serine protease that mediates the selective degradation of mutant and abnormal proteins as well as certain short-lived regulatory proteins. Required for cellular homeostasis and for survival from DNA damage and developmental changes induced by stress. Degrades polypeptides processively to yield small peptide fragments that are 5 to 10 amino acids long. Binds to DNA in a double-stranded, site-specific manner. The sequence is that of Lon protease from Koribacter versatilis (strain Ellin345).